Consider the following 513-residue polypeptide: ATP synthase subunit alpha (513 aa).

Residue 169–176 (GDRQTGKT) coordinates ATP.

This sequence belongs to the ATPase alpha/beta chains family. F-type ATPases have 2 components, CF(1) - the catalytic core - and CF(0) - the membrane proton channel. CF(1) has five subunits: alpha(3), beta(3), gamma(1), delta(1), epsilon(1). CF(0) has three main subunits: a(1), b(2) and c(9-12). The alpha and beta chains form an alternating ring which encloses part of the gamma chain. CF(1) is attached to CF(0) by a central stalk formed by the gamma and epsilon chains, while a peripheral stalk is formed by the delta and b chains.

The protein localises to the cell inner membrane. The catalysed reaction is ATP + H2O + 4 H(+)(in) = ADP + phosphate + 5 H(+)(out). In terms of biological role, produces ATP from ADP in the presence of a proton gradient across the membrane. The alpha chain is a regulatory subunit. The chain is ATP synthase subunit alpha from Pectobacterium carotovorum subsp. carotovorum (strain PC1).